The chain runs to 118 residues: Large ribosomal subunit protein bL20 (118 aa).

Belongs to the bacterial ribosomal protein bL20 family.

In terms of biological role, binds directly to 23S ribosomal RNA and is necessary for the in vitro assembly process of the 50S ribosomal subunit. It is not involved in the protein synthesizing functions of that subunit. The polypeptide is Large ribosomal subunit protein bL20 (Pseudomonas syringae pv. syringae (strain B728a)).